We begin with the raw amino-acid sequence, 356 residues long: GDSL esterase/lipase At5g37690 (356 aa).

A signal peptide spans 1-18 (MMILRLALAIVISTYATA). The active-site Nucleophile is the Ser34. N-linked (GlcNAc...) asparagine glycosylation is found at Asn116 and Asn291. Catalysis depends on residues Asp322 and His325.

This sequence belongs to the 'GDSL' lipolytic enzyme family.

The protein localises to the secreted. The chain is GDSL esterase/lipase At5g37690 from Arabidopsis thaliana (Mouse-ear cress).